Reading from the N-terminus, the 146-residue chain is Hemoglobin subunit beta-S/F (146 aa).

Position 1 is an N-acetylvaline (Val-1). Residues 2–146 (HLTDGEKNAI…VANALSHKYH (145 aa)) enclose the Globin domain. Ser-44 bears the Phosphoserine mark. Lys-59 is subject to N6-acetyllysine. His-63 provides a ligand contact to heme b. Lys-82 carries the N6-acetyllysine modification. His-92 is a heme b binding site. Cys-93 is modified (S-nitrosocysteine). Lys-144 carries the post-translational modification N6-acetyllysine.

It belongs to the globin family. As to quaternary structure, heterotetramer of two alpha chains and two beta chains. As to expression, red blood cells.

Involved in oxygen transport from the lung to the various peripheral tissues. This Urocitellus townsendii (Townsend's ground squirrel) protein is Hemoglobin subunit beta-S/F.